The chain runs to 520 residues: Glycosyl hydrolase family 109 protein 5 (520 aa).

The first 27 residues, 1-27 (MRTFKSLMISLCMGTTLCMCLPQTTTA), serve as a signal peptide directing secretion. NAD(+) is bound by residues 77 to 78 (MR), Asp99, 147 to 150 (WLHH), 167 to 168 (EV), and Asn196. Residues Tyr225, Arg248, 260-263 (YATH), and Tyr338 contribute to the substrate site. Tyr260 is a binding site for NAD(+).

The protein belongs to the Gfo/Idh/MocA family. Glycosyl hydrolase 109 subfamily. NAD(+) is required as a cofactor.

Its function is as follows. Glycosidase. In Phocaeicola vulgatus (strain ATCC 8482 / DSM 1447 / JCM 5826 / CCUG 4940 / NBRC 14291 / NCTC 11154) (Bacteroides vulgatus), this protein is Glycosyl hydrolase family 109 protein 5.